Consider the following 386-residue polypeptide: Succinate--CoA ligase [ADP-forming] subunit beta (386 aa).

The 236-residue stretch at 9 to 244 (KQILKKYGAV…LNEEDPTEID (236 aa)) folds into the ATP-grasp domain. ATP is bound by residues Lys-46, 53 to 55 (GRG), Glu-99, Ser-102, and Glu-107. 2 residues coordinate Mg(2+): Asn-199 and Asp-213. Substrate is bound by residues Asn-264 and 321 to 323 (GIM).

The protein belongs to the succinate/malate CoA ligase beta subunit family. As to quaternary structure, heterotetramer of two alpha and two beta subunits. Requires Mg(2+) as cofactor.

The enzyme catalyses succinate + ATP + CoA = succinyl-CoA + ADP + phosphate. It carries out the reaction GTP + succinate + CoA = succinyl-CoA + GDP + phosphate. It participates in carbohydrate metabolism; tricarboxylic acid cycle; succinate from succinyl-CoA (ligase route): step 1/1. In terms of biological role, succinyl-CoA synthetase functions in the citric acid cycle (TCA), coupling the hydrolysis of succinyl-CoA to the synthesis of either ATP or GTP and thus represents the only step of substrate-level phosphorylation in the TCA. The beta subunit provides nucleotide specificity of the enzyme and binds the substrate succinate, while the binding sites for coenzyme A and phosphate are found in the alpha subunit. The chain is Succinate--CoA ligase [ADP-forming] subunit beta from Pelagibacter ubique (strain HTCC1062).